A 119-amino-acid chain; its full sequence is Large ribosomal subunit protein bL20 (119 aa).

It belongs to the bacterial ribosomal protein bL20 family.

Its function is as follows. Binds directly to 23S ribosomal RNA and is necessary for the in vitro assembly process of the 50S ribosomal subunit. It is not involved in the protein synthesizing functions of that subunit. This chain is Large ribosomal subunit protein bL20, found in Thiobacillus denitrificans (strain ATCC 25259 / T1).